A 202-amino-acid polypeptide reads, in one-letter code: Small ribosomal subunit protein uS4 (202 aa).

Positions 94 to 157 (SRLDNLVYRM…KDLPIVAAGA (64 aa)) constitute an S4 RNA-binding domain.

This sequence belongs to the universal ribosomal protein uS4 family. As to quaternary structure, part of the 30S ribosomal subunit. Contacts protein S5. The interaction surface between S4 and S5 is involved in control of translational fidelity.

Its function is as follows. One of the primary rRNA binding proteins, it binds directly to 16S rRNA where it nucleates assembly of the body of the 30S subunit. With S5 and S12 plays an important role in translational accuracy. The protein is Small ribosomal subunit protein uS4 of Malacoplasma penetrans (strain HF-2) (Mycoplasma penetrans).